The sequence spans 886 residues: uncharacterized protein (886 aa).

The first 20 residues, 1–20, serve as a signal peptide directing secretion; it reads MKIIKSLILLVLFMASPAKG. The next 5 helical transmembrane spans lie at 520-540, 609-629, 647-667, 680-700, and 779-799; these read VTIF…VEVV, LLFI…IITI, VIAF…IILM, ISIL…FLLI, and LLFY…TIVV. Positions 856 to 886 are disordered; sequence EARKPQGGGEHTGKFFQNRNDVKPEQTERND. Residues 875–886 show a composition bias toward basic and acidic residues; it reads NDVKPEQTERND.

This sequence belongs to the TrbL/VirB6 family.

It is found in the cell membrane. This is an uncharacterized protein from Rickettsia bellii (strain RML369-C).